The chain runs to 843 residues: Protein P (843 aa).

Residues 1–177 (MPLSYQHFRR…FCGSPYSWEQ (177 aa)) are terminal protein domain (TP). The spacer stretch occupies residues 178–346 (ELQHGSTSLN…YCLSHIINLL (169 aa)). Disordered regions lie at residues 180–202 (QHGS…AQSS) and 226–315 (QHKQ…VGSE). Residues 239-249 (RSGRLRSRVHT) are compositionally biased toward basic residues. Polar residues-rich tracts occupy residues 262 to 277 (TGHS…SCFH) and 287 to 299 (PSLS…TSTG). The tract at residues 347 to 690 (EDWGPCYEHG…YMNLYPVARQ (344 aa)) is polymerase/reverse transcriptase domain (RT). The Reverse transcriptase domain occupies 357–600 (EHHIRTPKTP…YSLHFMGYII (244 aa)). Residues Asp-429, Asp-551, and Asp-552 each contribute to the Mg(2+) site.

The protein belongs to the hepadnaviridae P protein family.

It carries out the reaction DNA(n) + a 2'-deoxyribonucleoside 5'-triphosphate = DNA(n+1) + diphosphate. The catalysed reaction is Endonucleolytic cleavage to 5'-phosphomonoester.. Its activity is regulated as follows. Activated by host HSP70 and HSP40 in vitro to be able to bind the epsilon loop of the pgRNA. Because deletion of the RNase H region renders the protein partly chaperone-independent, the chaperones may be needed indirectly to relieve occlusion of the RNA-binding site by this domain. Inhibited by several reverse-transcriptase inhibitors: Lamivudine, Adefovir and Entecavir. Multifunctional enzyme that converts the viral RNA genome into dsDNA in viral cytoplasmic capsids. This enzyme displays a DNA polymerase activity that can copy either DNA or RNA templates, and a ribonuclease H (RNase H) activity that cleaves the RNA strand of RNA-DNA heteroduplexes in a partially processive 3'- to 5'-endonucleasic mode. Neo-synthesized pregenomic RNA (pgRNA) are encapsidated together with the P protein, and reverse-transcribed inside the nucleocapsid. Initiation of reverse-transcription occurs first by binding the epsilon loop on the pgRNA genome, and is initiated by protein priming, thereby the 5'-end of (-)DNA is covalently linked to P protein. Partial (+)DNA is synthesized from the (-)DNA template and generates the relaxed circular DNA (RC-DNA) genome. After budding and infection, the RC-DNA migrates in the nucleus, and is converted into a plasmid-like covalently closed circular DNA (cccDNA). The activity of P protein does not seem to be necessary for cccDNA generation, and is presumably released from (+)DNA by host nuclear DNA repair machinery. The protein is Protein P of Hepatitis B virus genotype H (isolate United States/LAS2523/2002) (HBV-H).